The chain runs to 526 residues: Zinc finger protein 69 homolog (526 aa).

The SCAN box domain maps to Met1–Phe39. One can recognise a KRAB domain in the interval Leu76 to Ser147. 9 consecutive C2H2-type zinc fingers follow at residues Tyr271–His293, Phe299–His321, Phe327–His349, Tyr355–His377, Phe383–His405, Tyr411–His433, Tyr439–His461, Tyr467–His489, and Tyr495–His517.

It belongs to the krueppel C2H2-type zinc-finger protein family. As to expression, expressed in visceral and subcutaneous adipose tissue.

The protein localises to the nucleus. Putative transcription factor that appears to regulate lipid metabolism. The polypeptide is Zinc finger protein 69 homolog (ZFP69) (Homo sapiens (Human)).